Consider the following 632-residue polypeptide: Extracellular metalloproteinase 2 (632 aa).

The N-terminal stretch at 1–19 (MHGLLLAGLAAALPLGVAG) is a signal peptide. Residues 20–244 (LPARQQSGLS…VHNVVDYVAS (225 aa)) constitute a propeptide that is removed on maturation. Asn270 carries N-linked (GlcNAc...) asparagine glycosylation. His429 serves as a coordination point for Zn(2+). The active site involves Glu430. A Zn(2+)-binding site is contributed by His433.

The protein belongs to the peptidase M36 family. It depends on Zn(2+) as a cofactor.

The protein localises to the secreted. Its function is as follows. Secreted metalloproteinase probably acting as a virulence factor. The protein is Extracellular metalloproteinase 2 (MEP2) of Arthroderma benhamiae (Trichophyton mentagrophytes).